We begin with the raw amino-acid sequence, 1173 residues long: Thrombospondin-1 (1173 aa).

Positions 1-18 are cleaved as a signal peptide; that stretch reads MKGIFLLLMLVMPQTHQA. The 203-residue stretch at 22–224 folds into the Laminin G-like domain; sequence GNDDNSVFDL…LQNVRFVFGT (203 aa). The tract at residues 50 to 98 is heparin-binding; the sequence is HLVKGPDPSSPAYRIEDADLIPPLPEDKFQDLLDAIRADRGFILLATLR. N-linked (GlcNAc...) asparagine glycans are attached at residues Asn-155 and Asn-158. A disulfide bridge links Cys-174 with Cys-235. Residues Asn-250 and Asn-363 are each glycosylated (N-linked (GlcNAc...) asparagine). The 58-residue stretch at 319 to 376 folds into the VWFC domain; it reads GVCLHNGVLHKNRDEWTVDSCTECTCQNSATICRKVSCPLMPCTNATIPDGECCPRCW. 3 consecutive TSP type-1 domains span residues 382–432, 438–493, and 495–550; these read DDDW…QDCD, DGGW…DPCP, and NGQW…QDCP. Intrachain disulfides connect Cys-394–Cys-426, Cys-398–Cys-431, Cys-409–Cys-416, Cys-450–Cys-487, Cys-454–Cys-492, Cys-465–Cys-477, Cys-507–Cys-544, Cys-511–Cys-549, Cys-522–Cys-534, Cys-554–Cys-565, Cys-559–Cys-575, Cys-578–Cys-589, Cys-595–Cys-611, Cys-602–Cys-620, Cys-623–Cys-647, Cys-653–Cys-666, Cys-660–Cys-679, and Cys-681–Cys-692. The EGF-like 1 domain maps to 550-590; it reads PIDGCLSNPCFAGVKCTSFIDGSWKCGSCPPGYRGNGITCK. The 45-residue stretch at 649–693 folds into the EGF-like 2 domain; that stretch reads PRNPCADGTHDCHKNARCIYLGHYSDPMFRCECRPGYAGNGIICG. 8 TSP type-3 repeats span residues 694-729, 730-765, 766-788, 789-824, 825-847, 848-885, 886-921, and 922-957; these read EDTD…NSGQ, EDYD…NPAQ, YDYD…NPDQ, ADTD…NVDQ, KDTD…NPEQ, TDSD…NANQ, ADHD…NPDQ, and TDTN…EIST. N-linked (GlcNAc...) asparagine glycans are attached at residues Asn-705 and Asn-711. Intrachain disulfides connect Cys-708–Cys-716, Cys-721–Cys-741, Cys-757–Cys-777, Cys-780–Cys-800, Cys-816–Cys-836, Cys-839–Cys-859, Cys-877–Cys-897, Cys-913–Cys-933, and Cys-949–Cys-1170. Positions 838 to 935 are disordered; the sequence is NCPLEHNPEQ…GDGRGDACQY (98 aa). Residues 886–897 are compositionally biased toward basic and acidic residues; that stretch reads ADHDKDGKGDAC. The Cell attachment site signature appears at 929 to 931; the sequence is RGD. The TSP C-terminal domain occupies 961 to 1173; that stretch reads RKFQMVPLDP…SDLKYECRDS (213 aa). N-linked (GlcNAc...) asparagine glycosylation is present at Asn-1070.

This sequence belongs to the thrombospondin family. Homotrimer; disulfide-linked.

The protein resides in the secreted. It localises to the cell surface. Its subcellular location is the extracellular space. It is found in the extracellular matrix. The protein localises to the endoplasmic reticulum. The protein resides in the sarcoplasmic reticulum. Its function is as follows. Adhesive glycoprotein that mediates cell-to-cell and cell-to-matrix interactions. Can bind to fibrinogen, fibronectin, laminin, type V collagen and integrins alpha-V/beta-1, alpha-V/beta-3 and alpha-IIb/beta-3. May play a role in ER stress response. The polypeptide is Thrombospondin-1 (thbs1) (Xenopus laevis (African clawed frog)).